Reading from the N-terminus, the 109-residue chain is Cell division suppressor protein YneA (109 aa).

The LysM domain occupies 39-90 (SEVDVNEGDSIWALADQYAAKSDMAKADFVSWVEKENNLTDGHVKAGDYVVI).

The protein belongs to the YneA family.

It is found in the cytoplasm. Its function is as follows. Inhibits cell division during the SOS response. Affects a later stage of the cell division protein assembly, after the assembly of the Z ring, by probably suppressing recruitment of FtsL and/or DivIC to the division machinery. This Listeria innocua serovar 6a (strain ATCC BAA-680 / CLIP 11262) protein is Cell division suppressor protein YneA.